The following is a 289-amino-acid chain: MSTFKPLKTLTSRRQVLKAGLAALTLSGMSQAIAKDELLKTSNGHSKPKAKKSGGKRVVVLDPGHGGIDTGAIGRNGSKEKHVVLAIAKNVRSILRNHGIDARLTRSGDTFIPLYDRVEIAHKHGADLFMSIHADGFTNPKAAGASVFALSNRGASSAMAKYLSERENRADEVAGKKATDKDHLLQQVLFDLVQTDTIKNSLTLGSHILKKIKPVHKLHSRNTEQAAFVVLKSPSVPSVLVETSFITNPEEERLLGTAAFRQKIATAIAEGVISYFHWFDNQKAHSKKR.

Positions 1–34 form a signal peptide, tat-type signal; the sequence is MSTFKPLKTLTSRRQVLKAGLAALTLSGMSQAIA. Positions 39-63 are disordered; sequence LKTSNGHSKPKAKKSGGKRVVVLDP. The segment covering 46–55 has biased composition (basic residues); sequence SKPKAKKSGG. The region spanning 59–273 is the MurNAc-LAA domain; it reads VVLDPGHGGI…IATAIAEGVI (215 aa).

Belongs to the N-acetylmuramoyl-L-alanine amidase 3 family. Post-translationally, exported by the Tat system. The position of the signal peptide cleavage has not been experimentally proven. Can also be exported by the Sec system.

It is found in the periplasm. The enzyme catalyses Hydrolyzes the link between N-acetylmuramoyl residues and L-amino acid residues in certain cell-wall glycopeptides.. In terms of biological role, cell-wall hydrolase involved in septum cleavage during cell division. Can also act as powerful autolysin in the presence of murein synthesis inhibitors. The protein is N-acetylmuramoyl-L-alanine amidase AmiA (amiA) of Escherichia coli (strain K12).